Consider the following 378-residue polypeptide: Protein RecA (378 aa).

79-86 (GPESSGKT) lines the ATP pocket.

It belongs to the RecA family.

It is found in the cytoplasm. Its function is as follows. Can catalyze the hydrolysis of ATP in the presence of single-stranded DNA, the ATP-dependent uptake of single-stranded DNA by duplex DNA, and the ATP-dependent hybridization of homologous single-stranded DNAs. It interacts with LexA causing its activation and leading to its autocatalytic cleavage. In Streptococcus pyogenes serotype M28 (strain MGAS6180), this protein is Protein RecA.